The following is a 175-amino-acid chain: Calcineurin subunit B (175 aa).

4 consecutive EF-hand domains span residues 21-56, 60-88, 90-125, and 131-166; these read PELM…ANNP, RMIA…FSSK, GRDE…MVGN, and QLQQ…TDIV. Residues Asp34, Asp36, Ser38, Ser40, Glu45, Asp66, Asp68, Ser70, Thr72, Glu77, Asp103, Asp105, Asp107, Tyr109, Glu114, Asp144, Asp146, Asp148, Lys150, and Glu155 each coordinate Ca(2+).

Belongs to the calcineurin regulatory subunit family. As to quaternary structure, composed of a catalytic subunit (A) and a regulatory subunit (B).

In terms of biological role, regulatory subunit of calcineurin, a calcium-dependent, calmodulin stimulated protein phosphatase. Confers calcium sensitivity. Plays a central role in virulence and antifungal drug action. The sequence is that of Calcineurin subunit B (CNB1) from Cryptococcus neoformans var. neoformans serotype D (strain B-3501A) (Filobasidiella neoformans).